Here is a 160-residue protein sequence, read N- to C-terminus: Endoribonuclease YbeY (160 aa).

Zn(2+) contacts are provided by His-112, His-116, and His-122. Residues Glu-141–Lys-160 form a disordered region.

It belongs to the endoribonuclease YbeY family. The cofactor is Zn(2+).

Its subcellular location is the cytoplasm. Functionally, single strand-specific metallo-endoribonuclease involved in late-stage 70S ribosome quality control and in maturation of the 3' terminus of the 16S rRNA. This Pseudomonas paraeruginosa (strain DSM 24068 / PA7) (Pseudomonas aeruginosa (strain PA7)) protein is Endoribonuclease YbeY.